The sequence spans 123 residues: Small ribosomal subunit protein uS13 (123 aa).

A disordered region spans residues 95–123; sequence GLPVRGQKTKTNARTRKGPKKAVASKKKK.

Belongs to the universal ribosomal protein uS13 family. In terms of assembly, part of the 30S ribosomal subunit. Forms a loose heterodimer with protein S19. Forms two bridges to the 50S subunit in the 70S ribosome.

Its function is as follows. Located at the top of the head of the 30S subunit, it contacts several helices of the 16S rRNA. In the 70S ribosome it contacts the 23S rRNA (bridge B1a) and protein L5 of the 50S subunit (bridge B1b), connecting the 2 subunits; these bridges are implicated in subunit movement. Contacts the tRNAs in the A and P-sites. The chain is Small ribosomal subunit protein uS13 from Clostridium acetobutylicum (strain ATCC 824 / DSM 792 / JCM 1419 / IAM 19013 / LMG 5710 / NBRC 13948 / NRRL B-527 / VKM B-1787 / 2291 / W).